Reading from the N-terminus, the 206-residue chain is Nucleoside triphosphate pyrophosphatase (206 aa).

D71 acts as the Proton acceptor in catalysis.

Belongs to the Maf family. The cofactor is a divalent metal cation.

The protein localises to the cytoplasm. It carries out the reaction a ribonucleoside 5'-triphosphate + H2O = a ribonucleoside 5'-phosphate + diphosphate + H(+). The enzyme catalyses a 2'-deoxyribonucleoside 5'-triphosphate + H2O = a 2'-deoxyribonucleoside 5'-phosphate + diphosphate + H(+). Its function is as follows. Nucleoside triphosphate pyrophosphatase. May have a dual role in cell division arrest and in preventing the incorporation of modified nucleotides into cellular nucleic acids. This chain is Nucleoside triphosphate pyrophosphatase, found in Rippkaea orientalis (strain PCC 8801 / RF-1) (Cyanothece sp. (strain PCC 8801)).